A 425-amino-acid chain; its full sequence is MDKNIGEQLNKAYEAFRQACMDRDSAVKELQQKTENYEQRIREQQEQLSLQQTIIDKLKSQLLLVNSTQDNNYGCVPLLEDSETRKNNLTLDQPQDKVISGIAREKLPKVRRQEVSSPRKETSARSLGSPLLHERGNIEKTFWDLKEEFHKICMLAKAQKDHLSKLNIPDTATETQCSVPIQCTDKTDKQEALFKPQAKDDINRGAPSITSVTPRGLCRDEEDTSFESLSKFNVKFPPMDNDSTFLHSTPERPGILSPATSEAVCQEKFNMEFRDNPGNFVKTEETLFEIQGIDPIASAIQNLKTTDKTKPSNLVNTCIRTTLDRAACLPPGDHNALYVNSFPLLDPSDAPFPSLDSPGKAIRGPQQPIWKPFPNQDSDSVVLSGTDSELHIPRVCEFCQAVFPPSITSRGDFLRHLNSHFNGET.

M1 carries the N-acetylmethionine modification. The necessary for interaction with ZC3H12A stretch occupies residues 1 to 31 (MDKNIGEQLNKAYEAFRQACMDRDSAVKELQ). A coiled-coil region spans residues 22 to 62 (DRDSAVKELQQKTENYEQRIREQQEQLSLQQTIIDKLKSQL). A necessary for interaction with TRAF6 region spans residues 70–191 (DNNYGCVPLL…QCTDKTDKQE (122 aa)). 2 positions are modified to phosphoserine: S126 and S129. The interaction with TBK1 and IKBKE stretch occupies residues 133–172 (HERGNIEKTFWDLKEEFHKICMLAKAQKDHLSKLNIPDTA). The interval 172–191 (ATETQCSVPIQCTDKTDKQE) is TRAF family member interaction. S178 and S208 each carry phosphoserine. A Phosphothreonine modification is found at T213. Phosphoserine occurs at positions 225, 228, 341, 354, and 357. A UBZ1-type zinc finger spans residues 393–420 (PRVCEFCQAVFPPSITSRGDFLRHLNSH). Zn(2+) contacts are provided by C396, C399, H416, and H420.

Homodimer. Found in a deubiquitination complex with TANK, USP10 and ZC3H12A; this complex inhibits genotoxic stress- or interleukin-1-beta-mediated NF-kappaB activation by promoting IKBKG or TRAF6 deubiquitination. Interacts with IKBKG; this interaction increases in response to DNA damage. Interacts with TRAF6; this interaction increases in response to DNA damage and recruits USP10 to the ubiquitinated TRAF6. Interacts with USP10; this interaction increases in response to DNA damage. Interacts with ZC3H12A; this interaction increases in response to DNA damage. Interacts with TBK1. Interacts with IKBKE. Also interacts with TRAF1, TRAF2, and TRAF3 by binding to their TRAF-C domains; the interaction with TRAF2 is disrupted by the phosphorylation of TANK by IKBKE. Interacts more strongly with TRAF1 and TRAF2 than TRAF3. Interacts with IKBKG; the interaction is enhanced by IKBKE and TBK1. Part of a ternary complex consisting of TANK, IKBKB and IKBKG. As to quaternary structure, (Microbial infection) Interacts with vaccinia virus protein C6. In terms of assembly, (Microbial infection) Interacts with Seneca Valley virus protease 3C; this interaction allows the cleavage of TANK and subsequent suppression of host innate immunity. Post-translationally, phosphorylated by IKBKE. (Microbial infection) Cleaved by encephalomyocarditis virus (EMCV) protease 3C. This cleavage allows the virus to disrupt the TANK-TBK1-IKKepsilon-IRF3 complex, thereby inhibiting the induction of the IFN-beta signal pathway. In terms of processing, (Microbial infection) Cleaved by Seneca Valley virus protease 3C allowing the virus to suppress interferon type-I through both RIG-I and Toll-like receptor-dependent pathways. In terms of tissue distribution, ubiquitous.

The protein resides in the cytoplasm. Functionally, adapter protein involved in I-kappa-B-kinase (IKK) regulation which constitutively binds TBK1 and IKBKE playing a role in antiviral innate immunity. Acts as a regulator of TRAF function by maintaining them in a latent state. Blocks TRAF2 binding to LMP1 and inhibits LMP1-mediated NF-kappa-B activation. Negatively regulates NF-kappaB signaling and cell survival upon DNA damage. Plays a role as an adapter to assemble ZC3H12A, USP10 in a deubiquitination complex which plays a negative feedback response to attenuate NF-kappaB activation through the deubiquitination of IKBKG or TRAF6 in response to interleukin-1-beta (IL1B) stimulation or upon DNA damage. Promotes UBP10-induced deubiquitination of TRAF6 in response to DNA damage. May control negatively TRAF2-mediated NF-kappa-B activation signaled by CD40, TNFR1 and TNFR2. In Homo sapiens (Human), this protein is TRAF family member-associated NF-kappa-B activator (TANK).